Here is a 678-residue protein sequence, read N- to C-terminus: Transcriptional regulator CRZ1 (678 aa).

The segment covering 1-21 (MSFSNGNMASYMTSSNGEEQS) has biased composition (polar residues). 2 disordered regions span residues 1–50 (MSFS…SHTF) and 159–195 (TPADNQHRPSLTNQFLSPRSNYDGTTRSSGIDSNYSD). Positions 34–47 (YRRNNFRNSSNSGS) are enriched in low complexity. The span at 166 to 195 (RPSLTNQFLSPRSNYDGTTRSSGIDSNYSD) shows a compositional bias: polar residues. At T170 the chain carries Phosphothreonine. Phosphoserine occurs at positions 175, 245, and 385. The tract at residues 401-486 (KLKKSRRRSS…SNFNEDNNNN (86 aa)) is disordered. The segment covering 410–428 (SQTSNNSFTSRRSSRSRSI) has biased composition (low complexity). Basic and acidic residues-rich tracts occupy residues 429-446 (SPDEKAKSISANREKLLE) and 457-467 (DNNRERYDNDS). Residues 472 to 486 (NTINSSNFNEDNNNN) are compositionally biased toward low complexity. 2 C2H2-type zinc fingers span residues 569 to 591 (FACDVCGKKFTRPYNLKSHLRTH) and 597 to 619 (FICSICGKAFARQHDRKRHEDLH).

Phosphorylated. Dephosphorylated by calcineurin which leads to rapid translocation from the cytoplasm to the nucleus. Phosphorylated by the cyclin-CDK PHO80-PHO85.

It localises to the nucleus. The protein resides in the cytoplasm. In terms of biological role, involved in the regulation of calcium ion homeostasis. Binds to the calcineurin-dependent response element. Transcriptionally regulates PMC1, PMR1, PMR2A and FKS2. This chain is Transcriptional regulator CRZ1 (CRZ1), found in Saccharomyces cerevisiae (strain ATCC 204508 / S288c) (Baker's yeast).